The chain runs to 251 residues: 5'-nucleotidase SurE (251 aa).

A divalent metal cation is bound by residues D9, D10, S40, and N94.

Belongs to the SurE nucleotidase family. A divalent metal cation serves as cofactor.

It is found in the cytoplasm. The enzyme catalyses a ribonucleoside 5'-phosphate + H2O = a ribonucleoside + phosphate. Nucleotidase that shows phosphatase activity on nucleoside 5'-monophosphates. This is 5'-nucleotidase SurE from Aquifex aeolicus (strain VF5).